Consider the following 89-residue polypeptide: UPF0223 protein BPUM_1362 (89 aa).

It belongs to the UPF0223 family.

This is UPF0223 protein BPUM_1362 from Bacillus pumilus (strain SAFR-032).